The chain runs to 209 residues: Probable phosphatidylglycerophosphatase, mitochondrial (209 aa).

The Phosphoryl acceptor signature appears at 57 to 61; that stretch reads DKDNC.

The protein belongs to the GEP4 family.

It is found in the mitochondrion inner membrane. It carries out the reaction a 1,2-diacyl-sn-glycero-3-phospho-(1'-sn-glycero-3'-phosphate) + H2O = a 1,2-diacyl-sn-glycero-3-phospho-(1'-sn-glycerol) + phosphate. It participates in phospholipid metabolism; phosphatidylglycerol biosynthesis; phosphatidylglycerol from CDP-diacylglycerol: step 2/2. Its function is as follows. Phosphatidylglycerophosphatase involved in the biosynthesis of cardiolipin (CL), a unique dimeric phosphoglycerolipid predominantly present in mitochondrial membranes and which has important functions for cellular energy metabolism, mitochondrial dynamics and the initiation of apoptotic pathways. The chain is Probable phosphatidylglycerophosphatase, mitochondrial (gep4) from Schizosaccharomyces pombe (strain 972 / ATCC 24843) (Fission yeast).